We begin with the raw amino-acid sequence, 413 residues long: Multifunctional CCA protein (413 aa).

2 residues coordinate ATP: G8 and R11. The CTP site is built by G8 and R11. Mg(2+) contacts are provided by D21 and D23. 3 residues coordinate ATP: R91, R137, and R140. Residues R91, R137, and R140 each contribute to the CTP site. In terms of domain architecture, HD spans T228–W329.

The protein belongs to the tRNA nucleotidyltransferase/poly(A) polymerase family. Bacterial CCA-adding enzyme type 1 subfamily. In terms of assembly, monomer. Can also form homodimers and oligomers. The cofactor is Mg(2+). It depends on Ni(2+) as a cofactor.

It carries out the reaction a tRNA precursor + 2 CTP + ATP = a tRNA with a 3' CCA end + 3 diphosphate. It catalyses the reaction a tRNA with a 3' CCA end + 2 CTP + ATP = a tRNA with a 3' CCACCA end + 3 diphosphate. Catalyzes the addition and repair of the essential 3'-terminal CCA sequence in tRNAs without using a nucleic acid template. Adds these three nucleotides in the order of C, C, and A to the tRNA nucleotide-73, using CTP and ATP as substrates and producing inorganic pyrophosphate. tRNA 3'-terminal CCA addition is required both for tRNA processing and repair. Also involved in tRNA surveillance by mediating tandem CCA addition to generate a CCACCA at the 3' terminus of unstable tRNAs. While stable tRNAs receive only 3'-terminal CCA, unstable tRNAs are marked with CCACCA and rapidly degraded. The sequence is that of Multifunctional CCA protein from Klebsiella pneumoniae (strain 342).